We begin with the raw amino-acid sequence, 577 residues long: Beta-fructofuranosidase, insoluble isoenzyme 1 (577 aa).

Residues 1-22 (MGTRLLALAPWLLLLLLQLAGA) form the signal peptide. Aspartate 63 is an active-site residue. Residues asparagine 158, asparagine 183, and asparagine 333 are each glycosylated (N-linked (GlcNAc...) asparagine).

This sequence belongs to the glycosyl hydrolase 32 family. Expressed in roots, leaves and flowers. Weakly expressed in seeds.

It is found in the secreted. Its subcellular location is the extracellular space. The protein localises to the apoplast. It localises to the cell wall. It carries out the reaction Hydrolysis of terminal non-reducing beta-D-fructofuranoside residues in beta-D-fructofuranosides.. Its function is as follows. May play a role in sucrose partitioning during seed development and in stress response. In Oryza sativa subsp. japonica (Rice), this protein is Beta-fructofuranosidase, insoluble isoenzyme 1 (CIN1).